The sequence spans 1839 residues: DNA-directed RNA polymerase II subunit RPB1 (1839 aa).

Residues cysteine 66, cysteine 69, cysteine 76, histidine 79, cysteine 106, cysteine 109, and cysteine 147 each contribute to the Zn(2+) site. The tract at residues 152-174 (DIDDVQSHSTDEPVKKSRGGCGA) is disordered. Residues 156–166 (VQSHSTDEPVK) are compositionally biased toward basic and acidic residues. Cysteine 172 provides a ligand contact to Zn(2+). Residues 326–397 (TQKSGRPIKS…PETVTPYNIE (72 aa)) mediate DNA binding. Mg(2+) contacts are provided by aspartate 495, aspartate 497, and aspartate 499. The tract at residues 785–795 (GQQNVEGKRIP) is alpha-amanitin binding. Residues 829–841 (PQEFFFHAMGGRE) form a bridging helix region. Low complexity predominate over residues 1538 to 1726 (PSSSPGYSPS…PSYGPTSPSY (189 aa)). Residues 1538 to 1839 (PSSSPGYSPS…DASKDDKGNP (302 aa)) are disordered. A run of 27 repeats spans residues 1544–1550 (YSPSSPG), 1551–1557 (YSPTSPG), 1558–1564 (YSPTSPG), 1565–1571 (YSPTSPG), 1572–1578 (YSPTSPT), 1579–1585 (YSPSSPG), 1586–1592 (YSPTSPA), 1593–1599 (YSPTSPS), 1600–1606 (YSPTSPS), 1607–1613 (YSPTSPS), 1614–1620 (YSPTSPS), 1621–1627 (YSPTSPS), 1628–1634 (YSPTSPS), 1635–1641 (YSPTSPA), 1642–1648 (YSPTSPA), 1649–1655 (YSPTSPA), 1656–1662 (YSPTSPS), 1663–1669 (YSPTSPS), 1670–1676 (YSPTSPS), 1677–1683 (YSPTSPS), 1684–1690 (YSPTSPS), 1691–1697 (YSPTSPA), 1698–1704 (YSPTSPG), 1705–1711 (YSPTSPS), 1712–1718 (YSPTSPS), 1719–1725 (YGPTSPS), and 1726–1732 (YNPQSAK). A C-terminal domain (CTD); 37 X 7 AA tandem approximate repeats of Y-[GNS]-P-[QST]-[LNS]-[APT]-[AGKNRSTY] region spans residues 1544–1813 (YSPSSPGYSP…LPGYSPSSTG (270 aa)). Residues 1727 to 1745 (NPQSAKYSPSIAYSPSNAR) are compositionally biased toward polar residues. Residues 1733-1738 (YSPSIA) form a 28; approximate repeat. A run of 6 repeats spans residues 1739-1745 (YSPSNAR), 1752-1758 (YSPTSPN), 1759-1765 (YSPTSPS), 1766-1772 (YSPTSPS), 1773-1779 (YSPSSPT), and 1780-1786 (YSPSSPY). Positions 1747 to 1798 (SPASPYSPTSPNYSPTSPSYSPTSPSYSPSSPTYSPSSPYSSGASPDYSPSA) are enriched in low complexity. The stretch at 1794-1799 (YSPSAG) is one 35; approximate repeat. Tandem repeats lie at residues 1800-1806 (YSPTLPG) and 1807-1813 (YSPSSTG). Residues 1818–1839 (HEGDKKDKTGKKDASKDDKGNP) show a composition bias toward basic and acidic residues.

Belongs to the RNA polymerase beta' chain family. As to quaternary structure, component of the RNA polymerase II (Pol II) complex consisting of at least 12 subunits. Interacts with RDM1. Interacts (via CTD) with PRP40A, PRP40B, PRP40C and CYP59. Interacts with MEE12/CCG1 and MEE14/CBP1. Binds (via CTD) to ATX1, especially when phosphorylated on 'Ser-5' of the heptapeptide repeat. The tandem 7 residues repeats in the C-terminal domain (CTD) can be highly phosphorylated. The phosphorylation activates Pol II. Phosphorylation occurs mainly at residues 'Ser-2' and 'Ser-5' of the heptapeptide repeat. The phosphorylation state is believed to result from the balanced action of site-specific CTD kinases and phosphatase, and a 'CTD code' that specifies the position of Pol II within the transcription cycle has been proposed. ATX1 seems to regulate phosphorylation statment. 'Ser-2' and 'Ser-5' phosphorylation are repressed by flavopiridol (Flap) and seliciclib (Selic), inhibitors of CDK7 and CDK9.

It is found in the nucleus. The catalysed reaction is RNA(n) + a ribonucleoside 5'-triphosphate = RNA(n+1) + diphosphate. Its function is as follows. DNA-dependent RNA polymerase catalyzes the transcription of DNA into RNA using the four ribonucleoside triphosphates as substrates. Largest and catalytic component of RNA polymerase II which synthesizes mRNA precursors and many functional non-coding RNAs. Forms the polymerase active center together with the second largest subunit. Pol II is the central component of the basal RNA polymerase II transcription machinery. It is composed of mobile elements that move relative to each other. NRPB1 is part of the core element with the central large cleft, the clamp element that moves to open and close the cleft and the jaws that are thought to grab the incoming DNA template. At the start of transcription, a single-stranded DNA template strand of the promoter is positioned within the central active site cleft of Pol II. A bridging helix emanates from NRPB1 and crosses the cleft near the catalytic site and is thought to promote translocation of Pol II by acting as a ratchet that moves the RNA-DNA hybrid through the active site by switching from straight to bent conformations at each step of nucleotide addition. During transcription elongation, Pol II moves on the template as the transcript elongates. Elongation is influenced by the phosphorylation status of the C-terminal domain (CTD) of Pol II largest subunit (NRPB1), which serves as a platform for assembly of factors that regulate transcription initiation, elongation, termination and mRNA processing. This Arabidopsis thaliana (Mouse-ear cress) protein is DNA-directed RNA polymerase II subunit RPB1.